The primary structure comprises 547 residues: Chaperonin GroEL (547 aa).

Residues 30–33, lysine 51, 87–91, glycine 415, 479–481, and aspartate 495 contribute to the ATP site; these read TLGP, DGTTT, and NAA.

It belongs to the chaperonin (HSP60) family. As to quaternary structure, forms a cylinder of 14 subunits composed of two heptameric rings stacked back-to-back. Interacts with the co-chaperonin GroES.

The protein resides in the cytoplasm. The catalysed reaction is ATP + H2O + a folded polypeptide = ADP + phosphate + an unfolded polypeptide.. Together with its co-chaperonin GroES, plays an essential role in assisting protein folding. The GroEL-GroES system forms a nano-cage that allows encapsulation of the non-native substrate proteins and provides a physical environment optimized to promote and accelerate protein folding. This Enterobacter sp. (strain 638) protein is Chaperonin GroEL.